Reading from the N-terminus, the 70-residue chain is Large ribosomal subunit protein uL29 (70 aa).

Belongs to the universal ribosomal protein uL29 family.

The polypeptide is Large ribosomal subunit protein uL29 (Thermosynechococcus vestitus (strain NIES-2133 / IAM M-273 / BP-1)).